A 142-amino-acid chain; its full sequence is DNA-directed RNA polymerase subunit omega (142 aa).

The tract at residues 104-142 is disordered; the sequence is FNTDADVDQESTDIQDDEVENEMSNQDSEDIDDEVDNEE. Over residues 108–142 the composition is skewed to acidic residues; it reads ADVDQESTDIQDDEVENEMSNQDSEDIDDEVDNEE.

Belongs to the RNA polymerase subunit omega family. The RNAP catalytic core consists of 2 alpha, 1 beta, 1 beta' and 1 omega subunit. When a sigma factor is associated with the core the holoenzyme is formed, which can initiate transcription.

The enzyme catalyses RNA(n) + a ribonucleoside 5'-triphosphate = RNA(n+1) + diphosphate. Its function is as follows. Promotes RNA polymerase assembly. Latches the N- and C-terminal regions of the beta' subunit thereby facilitating its interaction with the beta and alpha subunits. The polypeptide is DNA-directed RNA polymerase subunit omega (Wolbachia sp. subsp. Brugia malayi (strain TRS)).